Reading from the N-terminus, the 312-residue chain is Acetyl-coenzyme A carboxylase carboxyl transferase subunit alpha (312 aa).

The CoA carboxyltransferase C-terminal domain occupies 36 to 286; the sequence is RLDKEVKSIY…KEYFLDALRT (251 aa).

The protein belongs to the AccA family. Acetyl-CoA carboxylase is a heterohexamer composed of biotin carboxyl carrier protein (AccB), biotin carboxylase (AccC) and two subunits each of ACCase subunit alpha (AccA) and ACCase subunit beta (AccD).

The protein localises to the cytoplasm. It catalyses the reaction N(6)-carboxybiotinyl-L-lysyl-[protein] + acetyl-CoA = N(6)-biotinyl-L-lysyl-[protein] + malonyl-CoA. It functions in the pathway lipid metabolism; malonyl-CoA biosynthesis; malonyl-CoA from acetyl-CoA: step 1/1. Component of the acetyl coenzyme A carboxylase (ACC) complex. First, biotin carboxylase catalyzes the carboxylation of biotin on its carrier protein (BCCP) and then the CO(2) group is transferred by the carboxyltransferase to acetyl-CoA to form malonyl-CoA. The chain is Acetyl-coenzyme A carboxylase carboxyl transferase subunit alpha from Helicobacter pylori (strain G27).